The following is a 224-amino-acid chain: MTINHFALNAVDRSAEVQGKGASRRLRKQNLVPAIIYGGGEQPIAISIKINELVKSLEFEAFFSHILTLNVDGEEHQVVIKDLQRHPAKGFPMHADFQRVVKGQKINMNVPVHFSGREEAPGTKAGGILSTLVTDIEIVCIPSQLPEYLEIDVSGMEIGDLFRLSDIKLPEGVIIFDLDMEDAHDRTIVNMQPPTVQEVDKVAEIDASDVPATEQGTDGNKDGK.

The protein belongs to the bacterial ribosomal protein bL25 family. CTC subfamily. In terms of assembly, part of the 50S ribosomal subunit; part of the 5S rRNA/L5/L18/L25 subcomplex. Contacts the 5S rRNA. Binds to the 5S rRNA independently of L5 and L18.

In terms of biological role, this is one of the proteins that binds to the 5S RNA in the ribosome where it forms part of the central protuberance. The polypeptide is Large ribosomal subunit protein bL25 (Psychrobacter arcticus (strain DSM 17307 / VKM B-2377 / 273-4)).